The sequence spans 258 residues: Short-chain dehydrogenase/reductase FrzI (258 aa).

Positions 21, 41, and 94 each coordinate NADP(+). Active-site proton donor residues include S143 and S144. 4 residues coordinate NADP(+): Y157, K161, V191, and T193. The active-site Proton acceptor is Y157. K161 functions as the Lowers pKa of active site Tyr in the catalytic mechanism.

The protein belongs to the short-chain dehydrogenases/reductases (SDR) family.

The catalysed reaction is (1S,3S,6S,7S,8R)-7-hydroxy-6-[(4-methoxyphenyl)methyl]-3-(methylamino)-5-azatricyclo[6.3.1.0(1,5)]dodecan-9-one + NADPH + H(+) = (1S,3S,6S,7S,8S,9S)-6-[(4-methoxyphenyl)methyl]-3-(methylamino)-5-azatricyclo[6.3.1.0(1,5)]dodecane-7,9-diol + NADP(+). It participates in secondary metabolite biosynthesis. Its function is as follows. Short-chain dehydrogenase/reductase; part of the gene cluster that mediates the biosynthesis of the alkaloid (-)-FR901483, a potent immunosuppressant that shows efficacy in animal models and a probable inhibitor of purine nucleotide biosynthesis by targeting phosphoribosylpyrophosphate amidotransferase (PPAT). Within the pathway, FrzI catalyzes the formation of dephospho-(-)-FR901483 from the aza-tricyclic intermediate produced by FrzH. The biosynthesis of (-)-FR901483 starts with the condensation of two L-tyrosines to yield (S,S)-dityrosyl-piperazine. This process occurs in 3 steps with the non-canonical nonribosomal peptide synthetase FrzA catalyzing the reduction of L-tyrosine into L-tyrosinal, the spontaneous condensation of 2 L-tyrosinal units, and the subsequent reduction by the NmrA-like family domain-containing oxidoreductase FrzB. The cytochrome P450 monooxygenase FrzC then performs coupling between N10 and C1' to morph the piperazine into a 1,4-diazabicyclo[3.2.1]octane spiro-fused to a 2,5-cyclohexadienone. The dienone portion is further reduced to cyclohexanone by the flavin-dependent reductase FrzD. The methyltranserases (MTs) FrzE and FrzF are then involved in the methylation at the C10' amine and the C4 phenolic oxygen, respectively. The order of the two MTs appear to be interchangeable. Cleavage of the C9-N10' bond by the dioxygenase FrzG then leads to formation of a conjugated iminium. In addition to the oxidation of C9, an additional dehydrogenation between C7 and C8 can occur to give a likely shunt product. The next biosynthetic step is the intramolecular aldol condensation catalyzed by the newly identified aldolase FrzH to yield an aza-tricyclic product with the formation of a C9-C3' bond. The short-chain dehydrogenase/reductase FrzI then produces dephospho-(-)-FR901483 that is phosphorylated at C4'-OH into (-)-FR901483 by the phosphotransferase FrzJ. This is Short-chain dehydrogenase/reductase FrzI from Cladobotryum sp.